We begin with the raw amino-acid sequence, 53 residues long: UPF0391 membrane protein Ent638_0536 (53 aa).

A run of 2 helical transmembrane segments spans residues 4–24 (WGIIFLVIALIAAALGFGGLA) and 27–47 (AAWAAKLVFVVGIVLFLVSLF).

This sequence belongs to the UPF0391 family.

It localises to the cell membrane. This is UPF0391 membrane protein Ent638_0536 from Enterobacter sp. (strain 638).